Consider the following 82-residue polypeptide: Protein RALF-like 8 (82 aa).

An N-terminal signal peptide occupies residues 1–28 (MGMSKSIKVILSLALVVFLALAGTKVEA). 2 disulfides stabilise this stretch: Cys-47-Cys-55 and Cys-67-Cys-73.

The protein belongs to the plant rapid alkalinization factor (RALF) family. As to expression, expressed in leaves and flowers.

It is found in the secreted. Functionally, cell signaling peptide that may regulate plant stress, growth, and development. Mediates a rapid alkalinization of extracellular space by mediating a transient increase in the cytoplasmic Ca(2+) concentration leading to a calcium-dependent signaling events through a cell surface receptor and a concomitant activation of some intracellular mitogen-activated protein kinases. The chain is Protein RALF-like 8 (RALFL8) from Arabidopsis thaliana (Mouse-ear cress).